The sequence spans 341 residues: MAGPRNVRTLHGNGGRNNDVMGPKEFWLNIPPITRTLFTLAIVMTIVGRLNLINPWYFIYVWNLTFKKVQIWRLLTSCVMLSSRAMPALMELYSIYDRSSQLERGHFGPGLSNRRGPMVTVDYAYYLCFCILAITTATTIIYGSYYPVVLTSGFISCITYTWSIDNANVQIMFYGLIPVWGKYFPLIQLFISFVFNEGDFVISLIGFTTGYLYTCLDTHTLGPIWGMISRKADPTYGISPNGKFSTPWWFTSLYARITGAHNETATFNNNFANVPSSQRETRTFSGRGQRLGTAPATLSQTSGTDSGRASGSQLRSGPSNLNQFQGRGQRVGQTNSPSDSQ.

Residues 1 to 41 lie on the Cytoplasmic side of the membrane; it reads MAGPRNVRTLHGNGGRNNDVMGPKEFWLNIPPITRTLFTLA. The chain crosses the membrane as a helical span at residues 42–62; the sequence is IVMTIVGRLNLINPWYFIYVW. Residues 63-122 are Lumenal-facing; that stretch reads NLTFKKVQIWRLLTSCVMLSSRAMPALMELYSIYDRSSQLERGHFGPGLSNRRGPMVTVD. A helical membrane pass occupies residues 123–143; that stretch reads YAYYLCFCILAITTATTIIYG. At 144-170 the chain is on the cytoplasmic side; sequence SYYPVVLTSGFISCITYTWSIDNANVQ. The chain crosses the membrane as a helical span at residues 171-191; sequence IMFYGLIPVWGKYFPLIQLFI. Ser192 is a topological domain (lumenal). A helical transmembrane segment spans residues 193–213; that stretch reads FVFNEGDFVISLIGFTTGYLY. Topologically, residues 214-341 are cytoplasmic; the sequence is TCLDTHTLGP…GQTNSPSDSQ (128 aa). 2 stretches are compositionally biased toward polar residues: residues 276–286 and 296–341; these read SSQRETRTFSG and ATLS…SDSQ. The disordered stretch occupies residues 276 to 341; it reads SSQRETRTFS…GQTNSPSDSQ (66 aa).

It belongs to the derlin family.

It is found in the endoplasmic reticulum membrane. Functionally, may be involved in the degradation process of some misfolded endoplasmic reticulum (ER) luminal proteins. Its precise role is however unclear and its inability to complement der1 mutations, suggests either that it is not involved in degradation process of misfolded proteins, or that it participates in the destruction of specific misfolded ER luminal proteins. This Saccharomyces cerevisiae (strain ATCC 204508 / S288c) (Baker's yeast) protein is DER1-like family member protein 1 (DFM1).